The chain runs to 241 residues: Tumor necrosis factor receptor superfamily member grnd (241 aa).

A signal peptide spans 1–27 (MSVRKLSALSLSIGGVPLIPSVSLVAA). The Extracellular segment spans residues 28-98 (ANGESRDCHG…EMLDIQNTQQ (71 aa)). 4 cysteine pairs are disulfide-bonded: C35/C47, C40/C54, C57/C77, and C61/C73. N-linked (GlcNAc...) asparagine glycosylation occurs at N63. Residues 99–119 (LILLLLTILLVLIALRCAFQF) form a helical membrane-spanning segment. Residues 120 to 241 (LRWLIGNRCF…PSAATIPVAF (122 aa)) lie on the Cytoplasmic side of the membrane.

In terms of assembly, interacts (via extracellular cysteine-rich domain) with egr (via secreted TNF-homology soluble form); forms heterohexamers when 3 copies associate with egr trimers. Interacts with Traf6/TRAF2 and veli (via PDZ domain). In terms of processing, N-glycosylated on Asn-63. Glycosylation regulates ligand binding, specifically reducing affinity for the TNF egr, thereby inhibiting activation of JNK signaling. Expressed in the adult midgut; under normal conditions expressed at lower levels than the other TNF receptor wgn.

The protein resides in the apical cell membrane. The protein localises to the cytoplasmic vesicle membrane. Acts as a receptor for TNF-cytokine egr. Plays a role in activation of JNK signaling and is required for egr-induced apoptosis, including in wing imaginal discs during development. May also play an egr-independent role in cell proliferation. TNF receptor involved in triggering JNK-dependent proliferation of the enteroblast-enterocyte lineage in response to stress-induced release of egr by intestinal stem cells and enteroblasts. Involved in regulation of insulin production in response to dietary protein shortage keeping systemic growth in check. Activation in brain insulin producing cells through binding of egr released into the hemolymph in response to dietary amino acid shortage, results in JNK-dependent inhibition of insulin production. The polypeptide is Tumor necrosis factor receptor superfamily member grnd (Drosophila melanogaster (Fruit fly)).